A 382-amino-acid chain; its full sequence is Glutamine synthetase cytosolic isozyme (382 aa).

The region spanning 36 to 118 is the GS beta-grasp domain; it reads GKICAEYVWI…VMCDCYEPPK (83 aa). One can recognise a GS catalytic domain in the interval 135-382; it reads TRFACAEVME…RLIVETTILL (248 aa).

This sequence belongs to the glutamine synthetase family. In terms of assembly, homooctamer.

It is found in the cytoplasm. It catalyses the reaction L-glutamate + NH4(+) + ATP = L-glutamine + ADP + phosphate + H(+). This chain is Glutamine synthetase cytosolic isozyme (GLN1), found in Chlamydomonas reinhardtii (Chlamydomonas smithii).